An 82-amino-acid chain; its full sequence is Conotoxin Gla-TxX (82 aa).

The N-terminal stretch at 1–25 (MSGHTSVSFLLLSIVALGMVATVIC) is a signal peptide. Residues Glu30, Glu34, Glu37, Glu40, and Glu41 each carry the 4-carboxyglutamate modification. At Asn72 the chain carries Asparagine amide. The propeptide occupies 77 to 82 (LIHMQK).

In terms of processing, contains 4 disulfide bonds. As to expression, expressed by the venom duct.

The protein localises to the secreted. This chain is Conotoxin Gla-TxX, found in Conus textile (Cloth-of-gold cone).